The primary structure comprises 128 residues: Large ribosomal subunit protein bL20c (128 aa).

This sequence belongs to the bacterial ribosomal protein bL20 family.

The protein localises to the plastid. Its subcellular location is the chloroplast. Functionally, binds directly to 23S ribosomal RNA and is necessary for the in vitro assembly process of the 50S ribosomal subunit. It is not involved in the protein synthesizing functions of that subunit. This chain is Large ribosomal subunit protein bL20c, found in Nicotiana sylvestris (Wood tobacco).